The primary structure comprises 314 residues: Cell division protein FtsQ (314 aa).

2 stretches are compositionally biased toward basic and acidic residues: residues 1–15 and 30–57; these read MTEH…RVAD and ESKD…ERRA. The disordered stretch occupies residues 1-57; sequence MTEHNEDPQIERVADDAADEEAVTEPLATESKDEPAEHPEFEGPRRRARRERAERRA. The Cytoplasmic segment spans residues 1 to 99; sequence MTEHNEDPQI…AARGVVRGLK (99 aa). Residues 100-120 form a helical membrane-spanning segment; that stretch reads ALLATVVLAVVGIGLGLALYF. Over 121 to 314 the chain is Extracellular; that stretch reads TPAMSAREIV…VSSPDLPTVK (194 aa). The POTRA domain occupies 124-192; sequence MSAREIVIIG…SALRITIVER (69 aa).

The protein belongs to the FtsQ/DivIB family. FtsQ subfamily.

The protein resides in the cell membrane. Essential cell division protein. The polypeptide is Cell division protein FtsQ (Mycobacterium bovis (strain ATCC BAA-935 / AF2122/97)).